The chain runs to 158 residues: 2-amino-4-hydroxy-6-hydroxymethyldihydropteridine pyrophosphokinase (158 aa).

It belongs to the HPPK family.

It carries out the reaction 6-hydroxymethyl-7,8-dihydropterin + ATP = (7,8-dihydropterin-6-yl)methyl diphosphate + AMP + H(+). It functions in the pathway cofactor biosynthesis; tetrahydrofolate biosynthesis; 2-amino-4-hydroxy-6-hydroxymethyl-7,8-dihydropteridine diphosphate from 7,8-dihydroneopterin triphosphate: step 4/4. Its function is as follows. Catalyzes the transfer of pyrophosphate from adenosine triphosphate (ATP) to 6-hydroxymethyl-7,8-dihydropterin, an enzymatic step in folate biosynthesis pathway. In Methylorubrum extorquens (strain ATCC 14718 / DSM 1338 / JCM 2805 / NCIMB 9133 / AM1) (Methylobacterium extorquens), this protein is 2-amino-4-hydroxy-6-hydroxymethyldihydropteridine pyrophosphokinase (folK).